The sequence spans 98 residues: MRTQVLFLVLEVAAMASGDDTPHVYCGRRLAIMLSYLCDNQYLMKRTPYTSSESEGYGWRWLAPQRARQLAGARGKRQGIAEECCNKPCTEDELLGYC.

A signal peptide spans 1–18 (MRTQVLFLVLEVAAMASG). 3 cysteine pairs are disulfide-bonded: Cys26/Cys85, Cys38/Cys98, and Cys84/Cys89. Positions 47 to 75 (TPYTSSESEGYGWRWLAPQRARQLAGARG) are cleaved as a propeptide — c peptide like.

Belongs to the insulin family. Heterodimer of a B chain and an A chain linked by two disulfide bonds.

The protein localises to the secreted. Its function is as follows. Brain peptide responsible for activation of prothoracic glands to produce ecdysone in insects. This chain is Bombyxin A-3 homolog (SBXA3), found in Samia cynthia (Ailanthus silkmoth).